The chain runs to 385 residues: Rubredoxin-NAD(+) reductase (385 aa).

FAD contacts are provided by residues 8-11, 32-33, Ile79, Glu156, Asp275, and Ile293; these read AGTA and SR.

This sequence belongs to the FAD-dependent oxidoreductase family. In terms of assembly, homodimer. FAD is required as a cofactor.

It is found in the cytoplasm. It catalyses the reaction 2 reduced [rubredoxin] + NAD(+) + H(+) = 2 oxidized [rubredoxin] + NADH. Its pathway is hydrocarbon metabolism; alkane degradation. Functionally, involved in the hydrocarbon hydroxylating system, which transfers electrons from NADH to rubredoxin reductase and then through rubredoxin to alkane 1 monooxygenase. In Pseudomonas putida (Arthrobacter siderocapsulatus), this protein is Rubredoxin-NAD(+) reductase (alkT).